Here is a 353-residue protein sequence, read N- to C-terminus: Ribosomal RNA small subunit methyltransferase (353 aa).

The span at 1 to 10 (MAGGKIRKEK) shows a compositional bias: basic residues. The interval 1–23 (MAGGKIRKEKPKASNRAPSNHYQ) is disordered. The S-adenosyl-L-methionine site is built by histidine 35, leucine 37, glycine 62, glutamate 83, aspartate 111, and asparagine 126. The disordered stretch occupies residues 270–313 (ALNTTSMDLGDQSMGMEDDDNEMDDDDMEMDEGEGDGGETSEFK). Residues 285–308 (MEDDDNEMDDDDMEMDEGEGDGGE) are compositionally biased toward acidic residues.

This sequence belongs to the class I-like SAM-binding methyltransferase superfamily. rRNA adenine N(6)-methyltransferase family. In terms of tissue distribution, expressed in rapidly dividing tissues, including root meristems and lateral root primordia, developing cotyledons and leaves, petals, anther, pollen grains and silique abscission zone.

Its subcellular location is the nucleus. It localises to the nucleolus. It carries out the reaction adenosine(1785)/adenosine(1786) in 18S rRNA + 4 S-adenosyl-L-methionine = N(6)-dimethyladenosine(1785)/N(6)-dimethyladenosine(1786) in 18S rRNA + 4 S-adenosyl-L-homocysteine + 4 H(+). In terms of biological role, N6-adenine methyltransferase which modifies the AA dinucleotide at the plant nuclear 18S rRNA nucleotides A1785 and A1786. Required for generating appropriate patterns of gene expression during root development, including the cell-specific expression of transcriptional regulators involved in root hair and non-hair cells patterning. The sequence is that of Ribosomal RNA small subunit methyltransferase from Arabidopsis thaliana (Mouse-ear cress).